The primary structure comprises 195 residues: PRELI domain containing protein 3B (195 aa).

In terms of domain architecture, PRELI/MSF1 spans 1-172; that stretch reads MKIWTSEHVF…VIHKLNAEIE (172 aa). Phosphoserine is present on residues Ser46 and Ser51.

It belongs to the slowmo family.

The protein is PRELI domain containing protein 3B (Prelid3b) of Rattus norvegicus (Rat).